The following is a 228-amino-acid chain: Small ribosomal subunit protein uS3 (228 aa).

The 69-residue stretch at 39–107 (VREYLQDKLK…PVHINIEEIR (69 aa)) folds into the KH type-2 domain.

It belongs to the universal ribosomal protein uS3 family. As to quaternary structure, part of the 30S ribosomal subunit. Forms a tight complex with proteins S10 and S14.

Functionally, binds the lower part of the 30S subunit head. Binds mRNA in the 70S ribosome, positioning it for translation. In Pseudomonas aeruginosa (strain UCBPP-PA14), this protein is Small ribosomal subunit protein uS3.